The sequence spans 295 residues: Shikimate dehydrogenase (NADP(+)) (295 aa).

Shikimate-binding positions include 20 to 22 (SWS) and T68. The active-site Proton acceptor is the K72. Shikimate contacts are provided by N93 and D108. Residues 132 to 136 (GNGGA) and M234 contribute to the NADP(+) site. Position 236 (Y236) interacts with shikimate. G257 contacts NADP(+).

Belongs to the shikimate dehydrogenase family. As to quaternary structure, homodimer.

The catalysed reaction is shikimate + NADP(+) = 3-dehydroshikimate + NADPH + H(+). Its pathway is metabolic intermediate biosynthesis; chorismate biosynthesis; chorismate from D-erythrose 4-phosphate and phosphoenolpyruvate: step 4/7. In terms of biological role, involved in the biosynthesis of the chorismate, which leads to the biosynthesis of aromatic amino acids. Catalyzes the reversible NADPH linked reduction of 3-dehydroshikimate (DHSA) to yield shikimate (SA). The chain is Shikimate dehydrogenase (NADP(+)) from Chlorobaculum tepidum (strain ATCC 49652 / DSM 12025 / NBRC 103806 / TLS) (Chlorobium tepidum).